The sequence spans 305 residues: Lipoyl synthase (305 aa).

7 residues coordinate [4Fe-4S] cluster: cysteine 41, cysteine 46, cysteine 52, cysteine 68, cysteine 72, cysteine 75, and serine 281. The Radical SAM core domain maps to 54–270; the sequence is GARRTATFMI…RKVAMDKGFK (217 aa). Basic and acidic residues predominate over residues 283 to 298; it reads HADEQVNEAAKEKQRQ. Positions 283-305 are disordered; the sequence is HADEQVNEAAKEKQRQGEAQLNS.

It belongs to the radical SAM superfamily. Lipoyl synthase family. The cofactor is [4Fe-4S] cluster.

It is found in the cytoplasm. It catalyses the reaction [[Fe-S] cluster scaffold protein carrying a second [4Fe-4S](2+) cluster] + N(6)-octanoyl-L-lysyl-[protein] + 2 oxidized [2Fe-2S]-[ferredoxin] + 2 S-adenosyl-L-methionine + 4 H(+) = [[Fe-S] cluster scaffold protein] + N(6)-[(R)-dihydrolipoyl]-L-lysyl-[protein] + 4 Fe(3+) + 2 hydrogen sulfide + 2 5'-deoxyadenosine + 2 L-methionine + 2 reduced [2Fe-2S]-[ferredoxin]. It participates in protein modification; protein lipoylation via endogenous pathway; protein N(6)-(lipoyl)lysine from octanoyl-[acyl-carrier-protein]. Catalyzes the radical-mediated insertion of two sulfur atoms into the C-6 and C-8 positions of the octanoyl moiety bound to the lipoyl domains of lipoate-dependent enzymes, thereby converting the octanoylated domains into lipoylated derivatives. This chain is Lipoyl synthase, found in Staphylococcus aureus (strain bovine RF122 / ET3-1).